The following is a 292-amino-acid chain: Ribosomal protein L11 methyltransferase (292 aa).

Positions 143, 164, 186, and 227 each coordinate S-adenosyl-L-methionine.

This sequence belongs to the methyltransferase superfamily. PrmA family.

The protein resides in the cytoplasm. The catalysed reaction is L-lysyl-[protein] + 3 S-adenosyl-L-methionine = N(6),N(6),N(6)-trimethyl-L-lysyl-[protein] + 3 S-adenosyl-L-homocysteine + 3 H(+). Functionally, methylates ribosomal protein L11. The sequence is that of Ribosomal protein L11 methyltransferase from Hahella chejuensis (strain KCTC 2396).